A 99-amino-acid polypeptide reads, in one-letter code: UPF0235 protein AHA_3661 (99 aa).

It belongs to the UPF0235 family.

This chain is UPF0235 protein AHA_3661, found in Aeromonas hydrophila subsp. hydrophila (strain ATCC 7966 / DSM 30187 / BCRC 13018 / CCUG 14551 / JCM 1027 / KCTC 2358 / NCIMB 9240 / NCTC 8049).